Here is a 251-residue protein sequence, read N- to C-terminus: uncharacterized protein (251 aa).

Residues Asn-149, Asn-152, and Asn-207 are each glycosylated (N-linked (GlcNAc...) asparagine; by host). A helical membrane pass occupies residues 226 to 246; it reads YLIFIIIIIIFIILILLWIKY.

This sequence belongs to the glycosyltransferase 32 family.

The protein resides in the membrane. This is an uncharacterized protein from Acanthamoeba polyphaga (Amoeba).